The primary structure comprises 731 residues: MIRAPLVKALGALGSPTHQMASRAVRTSAMVAQTPAKAPEKIEVFVDDIPVQVVPGTTVLQAAAQIGVEIPRFCYHERLAVAGNCRMCLVEVEKSPKPVAACAMPVMKGWRIKTNSDLTRKAREGVMEFLLMNHPLDCPICDQGGECDLQDQAMAFGSDRSRFTDINYTGKRAVEDKDIGPLVKTIMTRCIHCTRCVRFASEIAGVDDLGTTGRGNDMQIGTYVEKLFLTELSGNVIDLCPVGALTNKPYSFVARPWEIRKVSSIDVLDAVGSNIVVSTRTNEVLRILPRENEDVNEEWLADKSRFACDGLKRQRLVAPMVRMPNGELQAVEWEGALIAVAKAIKAAGGQIAGISGQLADLEAQVALKDLLNRLGSEVVATEQGFIAGGTDNRANYLLNSTIAGLEEADAVLLVGTNPRYEAPLVNTRLRKAYVHNELQIASIGPKIDLSYDHENLGADAALVKDVCSGAHAFSKVLEGAKKPAIIIGADLLERADGAAIHATVAEYCKKLKKPNWNPFNVLQTNAAQVGALDVGYKAGAQTAVKAQPKVLFLLNADAGKVTREQLPKDCFVVYIGSHGDNGASIADAVLPGAAYTEKQGIYVNTEGRPQQTLPGVSPPGMAREDWKILRALSEVVGKPLPYDNLDELRNRLEDVAPHLTRLGQLEPAGDAGAAGTISKSIGGGAIDIKLKELRDYFMTDAISRASPTMAKCISAVNKQQRENEAKQSVAI.

The transit peptide at 1–27 directs the protein to the mitochondrion; that stretch reads MIRAPLVKALGALGSPTHQMASRAVRT. In terms of domain architecture, 2Fe-2S ferredoxin-type spans 40–118; it reads EKIEVFVDDI…GWRIKTNSDL (79 aa). [2Fe-2S] cluster contacts are provided by Cys-74, Cys-85, Cys-88, and Cys-102. In terms of domain architecture, 4Fe-4S His(Cys)3-ligated-type spans 118 to 157; sequence LTRKAREGVMEFLLMNHPLDCPICDQGGECDLQDQAMAFG. [4Fe-4S] cluster-binding residues include His-134, Cys-138, Cys-141, Cys-147, Cys-190, Cys-193, Cys-196, and Cys-240. The 4Fe-4S Mo/W bis-MGD-type domain maps to 259-315; it reads IRKVSSIDVLDAVGSNIVVSTRTNEVLRILPRENEDVNEEWLADKSRFACDGLKRQR.

This sequence belongs to the complex I 75 kDa subunit family. As to quaternary structure, complex I is composed of about 45 different subunits. [2Fe-2S] cluster is required as a cofactor. Requires [4Fe-4S] cluster as cofactor.

It localises to the mitochondrion inner membrane. It carries out the reaction a ubiquinone + NADH + 5 H(+)(in) = a ubiquinol + NAD(+) + 4 H(+)(out). Its function is as follows. Core subunit of the mitochondrial membrane respiratory chain NADH dehydrogenase (Complex I) that is believed to belong to the minimal assembly required for catalysis. Complex I functions in the transfer of electrons from NADH to the respiratory chain. The immediate electron acceptor for the enzyme is believed to be ubiquinone. This is the largest subunit of complex I and it is a component of the iron-sulfur (IP) fragment of the enzyme. It may form part of the active site crevice where NADH is oxidized. In Drosophila melanogaster (Fruit fly), this protein is NADH-ubiquinone oxidoreductase 75 kDa subunit, mitochondrial.